Here is a 213-residue protein sequence, read N- to C-terminus: 5-methylthioribulose-1-phosphate/5-deoxyribulose-1-phosphate aldolase (213 aa).

Glutamate 73 serves as the catalytic Proton donor/acceptor. Glutamate 73, histidine 92, histidine 94, and histidine 155 together coordinate Co(2+).

This sequence belongs to the aldolase class II family. Co(2+) is required as a cofactor.

It carries out the reaction 5-(methylsulfanyl)-D-ribulose 1-phosphate = 2-(methylsulfanyl)acetaldehyde + dihydroxyacetone phosphate. It catalyses the reaction 5-deoxy-D-ribulose 1-phosphate = dihydroxyacetone phosphate + acetaldehyde. The protein operates within amino-acid biosynthesis; L-methionine biosynthesis via salvage pathway. In terms of biological role, uses 5-methylthioribulose-1-phosphate to yield 2-(methylthio)acetaldehyde and dihydroxyacetone phosphate. Can also use 5-deoxyribulose 1-phosphate to yield acetaldehyde and dihydroxyacetone phosphate. Part of a bifunctional DHAP-shunt salvage pathway for SAM by-products. This is 5-methylthioribulose-1-phosphate/5-deoxyribulose-1-phosphate aldolase from Escherichia coli O45:K1 (strain S88 / ExPEC).